Consider the following 212-residue polypeptide: MADLFAPAPEPSTELGRLRVLSKSAGIRVSPLILGGMSIGDAWSEILGSMSKERAFELLDAFYEAGGNFIDTANNYQNEQSEAWIGEWMVSRKLRDQIVIATKFTTDYKKYDVGGGKSANYCGNHKRSLHVSVRDSLRKLQTDWIDILYVHWWDYMSSIEEVMDSLHILVQQARSSIWVCLIRLPGLFLRQITTLNLMVKPLLASIKVNGTC.

Y76 (proton donor) is an active-site residue.

Belongs to the aldo/keto reductase family. Aldo/keto reductase 2 subfamily.

This chain is Putative aryl-alcohol dehydrogenase AAD6, found in Saccharomyces cerevisiae (strain ATCC 204508 / S288c) (Baker's yeast).